A 31-amino-acid polypeptide reads, in one-letter code: Cytochrome b6-f complex subunit 6 (31 aa).

Residues 4–24 form a helical membrane-spanning segment; that stretch reads IFSYIALLLSALVITLTCYIG.

Belongs to the PetL family. In terms of assembly, the 4 large subunits of the cytochrome b6-f complex are cytochrome b6, subunit IV (17 kDa polypeptide, PetD), cytochrome f and the Rieske protein, while the 4 small subunits are PetG, PetL, PetM and PetN. The complex functions as a dimer.

The protein localises to the plastid. Its subcellular location is the chloroplast thylakoid membrane. Functionally, component of the cytochrome b6-f complex, which mediates electron transfer between photosystem II (PSII) and photosystem I (PSI), cyclic electron flow around PSI, and state transitions. PetL is important for photoautotrophic growth as well as for electron transfer efficiency and stability of the cytochrome b6-f complex. This Chlorella vulgaris (Green alga) protein is Cytochrome b6-f complex subunit 6.